The primary structure comprises 245 residues: 1-(5-phosphoribosyl)-5-[(5-phosphoribosylamino)methylideneamino] imidazole-4-carboxamide isomerase (245 aa).

Catalysis depends on Asp-7, which acts as the Proton acceptor. Residue Asp-129 is the Proton donor of the active site.

Belongs to the HisA/HisF family.

It is found in the cytoplasm. The catalysed reaction is 1-(5-phospho-beta-D-ribosyl)-5-[(5-phospho-beta-D-ribosylamino)methylideneamino]imidazole-4-carboxamide = 5-[(5-phospho-1-deoxy-D-ribulos-1-ylimino)methylamino]-1-(5-phospho-beta-D-ribosyl)imidazole-4-carboxamide. The protein operates within amino-acid biosynthesis; L-histidine biosynthesis; L-histidine from 5-phospho-alpha-D-ribose 1-diphosphate: step 4/9. This Shewanella piezotolerans (strain WP3 / JCM 13877) protein is 1-(5-phosphoribosyl)-5-[(5-phosphoribosylamino)methylideneamino] imidazole-4-carboxamide isomerase.